The chain runs to 266 residues: HLA class II histocompatibility antigen, DR beta 4 chain (266 aa).

The signal sequence occupies residues 1–29; that stretch reads MVCLKLPGGSCMAALTVTLTVLSSPLALA. The segment at 30–124 is beta-1; it reads GDTQPRFLEQ…VESFTVQRRV (95 aa). The Extracellular portion of the chain corresponds to 30–227; it reads GDTQPRFLEQ…SARSESAQSK (198 aa). 2 disulfides stabilise this stretch: Cys-44–Cys-108 and Cys-146–Cys-202. An N-linked (GlcNAc...) asparagine glycan is attached at Asn-48. Residues 125–227 are beta-2; the sequence is QPKVTVYPSK…SARSESAQSK (103 aa). Residues 126-216 enclose the Ig-like C1-type domain; sequence PKVTVYPSKT…PSMMSPLTVQ (91 aa). The chain crosses the membrane as a helical span at residues 228 to 250; it reads MLSGVGGFVLGLLFLGTGLFIYF. Over 251-266 the chain is Cytoplasmic; the sequence is RNQKGHSGLQPTGLLS. Lys-254 participates in a covalent cross-link: Glycyl lysine isopeptide (Lys-Gly) (interchain with G-Cter in ubiquitin).

Belongs to the MHC class II family. In terms of assembly, heterodimer of an alpha and a beta subunit; also referred as MHC class II molecule. In the endoplasmic reticulum (ER) it forms a heterononamer; 3 MHC class II molecules bind to a CD74 homotrimer (also known as invariant chain or HLA class II histocompatibility antigen gamma chain). In the endosomal/lysosomal system; CD74 undergoes sequential degradation by various proteases; leaving a small fragment termed CLIP on each MHC class II molecule. MHC class II molecule interacts with HLA_DM, and HLA_DO in B-cells, in order to release CLIP and facilitate the binding of antigenic peptides. Post-translationally, ubiquitinated by MARCH1 and MARCH8 at Lys-254 leading to sorting into the endosome system and down-regulation of MHC class II. When associated with ubiquitination of the alpha subunit of HLA-DR: HLA-DRA 'Lys-244', the down-regulation of MHC class II may be highly effective.

It localises to the cell membrane. Its subcellular location is the endoplasmic reticulum membrane. It is found in the golgi apparatus. The protein localises to the trans-Golgi network membrane. The protein resides in the endosome membrane. It localises to the lysosome membrane. Its subcellular location is the late endosome membrane. Functionally, binds peptides derived from antigens that access the endocytic route of antigen presenting cells (APC) and presents them on the cell surface for recognition by the CD4 T-cells. The peptide binding cleft accommodates peptides of 10-30 residues. The peptides presented by MHC class II molecules are generated mostly by degradation of proteins that access the endocytic route, where they are processed by lysosomal proteases and other hydrolases. Exogenous antigens that have been endocytosed by the APC are thus readily available for presentation via MHC II molecules, and for this reason this antigen presentation pathway is usually referred to as exogenous. As membrane proteins on their way to degradation in lysosomes as part of their normal turn-over are also contained in the endosomal/lysosomal compartments, exogenous antigens must compete with those derived from endogenous components. Autophagy is also a source of endogenous peptides, autophagosomes constitutively fuse with MHC class II loading compartments. In addition to APCs, other cells of the gastrointestinal tract, such as epithelial cells, express MHC class II molecules and CD74 and act as APCs, which is an unusual trait of the GI tract. To produce a MHC class II molecule that presents an antigen, three MHC class II molecules (heterodimers of an alpha and a beta chain) associate with a CD74 trimer in the ER to form a heterononamer. Soon after the entry of this complex into the endosomal/lysosomal system where antigen processing occurs, CD74 undergoes a sequential degradation by various proteases, including CTSS and CTSL, leaving a small fragment termed CLIP (class-II-associated invariant chain peptide). The removal of CLIP is facilitated by HLA-DM via direct binding to the alpha-beta-CLIP complex so that CLIP is released. HLA-DM stabilizes MHC class II molecules until primary high affinity antigenic peptides are bound. The MHC II molecule bound to a peptide is then transported to the cell membrane surface. In B-cells, the interaction between HLA-DM and MHC class II molecules is regulated by HLA-DO. Primary dendritic cells (DCs) also to express HLA-DO. Lysosomal microenvironment has been implicated in the regulation of antigen loading into MHC II molecules, increased acidification produces increased proteolysis and efficient peptide loading. This is HLA class II histocompatibility antigen, DR beta 4 chain (HLA-DRB4) from Homo sapiens (Human).